The sequence spans 341 residues: Zinc transporter ZIP11 (341 aa).

Helical transmembrane passes span Leu-12–Phe-32, Leu-44–Val-64, Gly-72–Val-92, Ile-193–Val-213, Phe-262–Val-284, Ile-289–Met-306, and Leu-321–Gly-341.

It belongs to the ZIP transporter (TC 2.A.5) family.

It is found in the cell membrane. The protein resides in the nucleus. It localises to the cytoplasm. The protein localises to the golgi apparatus. The enzyme catalyses Zn(2+)(in) = Zn(2+)(out). The catalysed reaction is Cu(2+)(in) = Cu(2+)(out). Its function is as follows. Zinc importer that regulates cytosolic zinc concentrations either via zinc influx from the extracellular compartment or efflux from intracellular organelles such as Golgi apparatus. May transport copper ions as well. The transport mechanism remains to be elucidated. The polypeptide is Zinc transporter ZIP11 (SLC39A11) (Bos taurus (Bovine)).